Here is a 650-residue protein sequence, read N- to C-terminus: MRLFIAEKPSLARAIADVLPKPHQRGDGFIKCGADDYVTWCIGHLLEQAEPDAYDPKFKQWRLEHLPIIPEKWQLIPRKDVHKQLTIVEKLIHQADILINAGDPDREGQLLVDEVFSYANLSVDKLNQIQRCLISDLNPSAVEKAVNKLQSNRNFIPLATSALARARADWLYGINMTRAYTLRGRQAGYQGVLSVGRVQTPVLGLIVRRDLEIENFKPQDFFEVLAHIQAETPEKITALSAQEKANIPQFKALWQPSKACEDYQDEEGRVLSLGLVENVVKRIAQQPAEVVEYVDKREHESAPLPYSLSALQIDAAKRYGLSAQEVLDICQRLYETHRLITYPRSDCRYLPEEHFGERTKVFQAISRHISDYQPLPDILNPEQKNRCWNDKKVEAHHAIIPTAKNTPVNLNQREWQIYHLIARQYLMQFCPDAEYRKSKITLNIAGGTFIAQARNLQVAGWKQLLGKEDSDEQQEPLLPVVKKGQILFCEKGEIVSKKTQPPKPFTDATLLSAMTGIARFVQDKELKKILRETDGLGTEATRAGIIELLFKRGFLYKKGRNIHSTETGRILIQALPDVATQPDMTAHWESQLTSISQKEMSYQQFMSTLTNFLPELMRYVNFAALRQLSQVEKPQSFSKKMSAKSKKRPT.

One can recognise a Toprim domain in the interval 1-134 (MRLFIAEKPS…KLNQIQRCLI (134 aa)). Glu7, Asp103, and Asp105 together coordinate Mg(2+). The Topo IA-type catalytic domain maps to 155–617 (FIPLATSALA…TLTNFLPELM (463 aa)). The interval 194 to 199 (SVGRVQ) is interaction with DNA. Tyr342 serves as the catalytic O-(5'-phospho-DNA)-tyrosine intermediate.

This sequence belongs to the type IA topoisomerase family. Mg(2+) serves as cofactor.

The catalysed reaction is ATP-independent breakage of single-stranded DNA, followed by passage and rejoining.. Its function is as follows. Releases the supercoiling and torsional tension of DNA, which is introduced during the DNA replication and transcription, by transiently cleaving and rejoining one strand of the DNA duplex. Introduces a single-strand break via transesterification at a target site in duplex DNA. The scissile phosphodiester is attacked by the catalytic tyrosine of the enzyme, resulting in the formation of a DNA-(5'-phosphotyrosyl)-enzyme intermediate and the expulsion of a 3'-OH DNA strand. The free DNA strand then undergoes passage around the unbroken strand, thus removing DNA supercoils. Finally, in the religation step, the DNA 3'-OH attacks the covalent intermediate to expel the active-site tyrosine and restore the DNA phosphodiester backbone. The sequence is that of DNA topoisomerase 3 from Pasteurella multocida (strain Pm70).